The sequence spans 201 residues: Myelomonocytic growth factor (201 aa).

Positions 1-23 (MCCLTPVLALALVLGAPWQALHG) are cleaved as a signal peptide. 2 cysteine pairs are disulfide-bonded: C61–C67 and C89–C99. N-linked (GlcNAc...) asparagine glycans are attached at residues N123 and N137.

The protein belongs to the IL-6 superfamily.

It localises to the secreted. Its function is as follows. Hematopoietic growth factor that stimulates the proliferation and colony formation of normal and transformed avian cells of the myeloid lineage. In Gallus gallus (Chicken), this protein is Myelomonocytic growth factor.